Here is a 172-residue protein sequence, read N- to C-terminus: Stellate protein CG33243 (172 aa).

The protein belongs to the casein kinase 2 subunit beta family. In terms of assembly, interacts in vitro with the casein kinase 2 alpha subunit (CkII-alpha). The relevance of such interaction is however unclear in vivo. Probably not expressed in wild-type flies. In males lacking the Y chromosome, it is testis-specific and constitutes the main component of star-shaped crystals.

In terms of biological role, unknown. In males lacking the Y chromosome, its strong overexpression leads to the appearance of proteinaceous star-shaped crystals in the primary spermatocytes causing meiotic drive, possibly by interfering with normal casein kinase 2 activity. In Drosophila melanogaster (Fruit fly), this protein is Stellate protein CG33243 (Ste:CG33243).